Here is a 307-residue protein sequence, read N- to C-terminus: Chlorophyll a-b binding protein 1, chloroplastic (307 aa).

A chloroplast-targeting transit peptide spans 1 to 44 (MAPYSVVASVLAAAPPQQSGSVRQLPSTINRAITQRSQSRHVAS). The disordered stretch occupies residues 34–54 (TQRSQSRHVASASSASSPTTM). Chlorophyll a contacts are provided by T52, E63, I64, G65, Y68, L81, P86, R89, G90, F91, and D92. Loroxanthin is bound at residue L96. A helical membrane pass occupies residues 111–143 (NYDESRLRWLLEGELYNGRLAMLAVVGVLTVEA). 5 residues coordinate chlorophyll a: L120, E124, N127, M132, and K146. W149 lines the loroxanthin pocket. The chlorophyll a site is built by E151, Y163, H171, E178, R181, E190, R198, and D200. A helical transmembrane segment spans residues 161–186 (TPYVVAVVGGHLAFALLEKKRLENFR). Positions 200 and 202 each coordinate all-trans-violaxanthin. Residues L204, N208, Y214, N215, A218, N222, and R224 each contribute to the chlorophyll a site. Residues 213-238 (DYNRQAEVRNCRLAMLTFLGFSVQAW) form a helical membrane-spanning segment. A loroxanthin-binding site is contributed by F230. F233 serves as a coordination point for all-trans-violaxanthin. Q236 provides a ligand contact to chlorophyll a. P244 lines the all-trans-violaxanthin pocket. Chlorophyll a contacts are provided by N247, H251, P255, F256, A258, N259, I260, and F274. A helical transmembrane segment spans residues 265 to 289 (DRGTNVVAIFSAFAAVMHIAELARE).

It belongs to the light-harvesting chlorophyll a/b-binding (LHC) protein family. Homooligomer. Component of a light-harvesting complex (LHC) consisting of 11 chlorophyll a-b binding proteins. Binds 11 chlorophylls (Chl-a and Chl-b) and the 2 carotenoids violaxanthin and loroxanthin. serves as cofactor.

Its subcellular location is the plastid. The protein localises to the chloroplast thylakoid membrane. Component of a light-harvesting complex (LHC). The LHC functions as a light receptor, it captures and delivers excitation energy to photosystems with which it is closely associated. Functions in a far-red LHC by absorbing far-red light and promoting photosystem II (PSII) excitation, likely with entropy-driven uphill excitation energy transfer. Exhibits a typical absorption band at 671 nm (Qy band), as well as a large far-red absorption band at 706.5 together with fluorescence emission at around 713 nm (F713). In Prasiola crispa (Green alga), this protein is Chlorophyll a-b binding protein 1, chloroplastic.